The following is a 284-amino-acid chain: Bifunctional protein FolD 1 (284 aa).

NADP(+)-binding positions include G166–S168 and I232.

This sequence belongs to the tetrahydrofolate dehydrogenase/cyclohydrolase family. In terms of assembly, homodimer.

It carries out the reaction (6R)-5,10-methylene-5,6,7,8-tetrahydrofolate + NADP(+) = (6R)-5,10-methenyltetrahydrofolate + NADPH. The enzyme catalyses (6R)-5,10-methenyltetrahydrofolate + H2O = (6R)-10-formyltetrahydrofolate + H(+). It functions in the pathway one-carbon metabolism; tetrahydrofolate interconversion. In terms of biological role, catalyzes the oxidation of 5,10-methylenetetrahydrofolate to 5,10-methenyltetrahydrofolate and then the hydrolysis of 5,10-methenyltetrahydrofolate to 10-formyltetrahydrofolate. This is Bifunctional protein FolD 1 from Pseudomonas syringae pv. tomato (strain ATCC BAA-871 / DC3000).